Consider the following 511-residue polypeptide: Bifunctional purine biosynthesis protein PurH (511 aa).

One can recognise an MGS-like domain in the interval 1–145 (MKKRALVSVS…KNHKFVSVIV (145 aa)).

It belongs to the PurH family.

It catalyses the reaction (6R)-10-formyltetrahydrofolate + 5-amino-1-(5-phospho-beta-D-ribosyl)imidazole-4-carboxamide = 5-formamido-1-(5-phospho-D-ribosyl)imidazole-4-carboxamide + (6S)-5,6,7,8-tetrahydrofolate. The catalysed reaction is IMP + H2O = 5-formamido-1-(5-phospho-D-ribosyl)imidazole-4-carboxamide. It functions in the pathway purine metabolism; IMP biosynthesis via de novo pathway; 5-formamido-1-(5-phospho-D-ribosyl)imidazole-4-carboxamide from 5-amino-1-(5-phospho-D-ribosyl)imidazole-4-carboxamide (10-formyl THF route): step 1/1. The protein operates within purine metabolism; IMP biosynthesis via de novo pathway; IMP from 5-formamido-1-(5-phospho-D-ribosyl)imidazole-4-carboxamide: step 1/1. This chain is Bifunctional purine biosynthesis protein PurH, found in Bacillus cereus (strain ATCC 10987 / NRS 248).